A 122-amino-acid polypeptide reads, in one-letter code: Aspartate 1-decarboxylase (122 aa).

The Schiff-base intermediate with substrate; via pyruvic acid role is filled by serine 25. Serine 25 is modified (pyruvic acid (Ser)). Threonine 57 contributes to the substrate binding site. The Proton donor role is filled by tyrosine 58. Residue 73-75 participates in substrate binding; sequence GAA.

It belongs to the PanD family. In terms of assembly, heterooctamer of four alpha and four beta subunits. Pyruvate is required as a cofactor. In terms of processing, is synthesized initially as an inactive proenzyme, which is activated by self-cleavage at a specific serine bond to produce a beta-subunit with a hydroxyl group at its C-terminus and an alpha-subunit with a pyruvoyl group at its N-terminus.

The protein localises to the cytoplasm. It carries out the reaction L-aspartate + H(+) = beta-alanine + CO2. The protein operates within cofactor biosynthesis; (R)-pantothenate biosynthesis; beta-alanine from L-aspartate: step 1/1. Catalyzes the pyruvoyl-dependent decarboxylation of aspartate to produce beta-alanine. The protein is Aspartate 1-decarboxylase of Bordetella parapertussis (strain 12822 / ATCC BAA-587 / NCTC 13253).